Reading from the N-terminus, the 421-residue chain is 5-hydroxytryptamine receptor 1A (421 aa).

The Extracellular portion of the chain corresponds to 1-38 (MDMFSLGQGNNTTTSLEPFGTGGNDTGLSNVTFSYQVI). Residues asparagine 10, asparagine 11, asparagine 24, and asparagine 30 are each glycosylated (N-linked (GlcNAc...) asparagine). Residues 39 to 59 (TSLLLGTLIFCAVLGNACVVA) form a helical membrane-spanning segment. At 60–73 (AIALERSLQNVANY) the chain is on the cytoplasmic side. Residues 74–98 (LIGSLAVTDLMVSVLVLPMAALYQV) form a helical membrane-spanning segment. Over 99–107 (LNKWTLGQV) the chain is Extracellular. Residues 108 to 132 (TCDLFIALDVLCCTSSILHLCAIAL) traverse the membrane as a helical segment. Cysteines 109 and 187 form a disulfide. Serotonin is bound by residues aspartate 116 and cysteine 120. The short motif at 133–135 (DRY) is the DRY motif; important for ligand-induced conformation changes element. Over 133–152 (DRYWAITDPIDYVNKRTPRR) the chain is Cytoplasmic. The chain crosses the membrane as a helical span at residues 153–174 (AAALISLTWLIGFLISIPPMLG). Residues 175 to 193 (WRTPEDRSNPNECTISKDH) are Extracellular-facing. A helical membrane pass occupies residues 194–216 (GYTIYSTFGAFYIPLLLMLVLYG). The Cytoplasmic portion of the chain corresponds to 217-346 (RIFRAARFRI…LARERKTVKT (130 aa)). A disordered region spans residues 237–268 (GAGTSFGTSSAPPPKKSLNGQPGSGDCRRSAE). Residues threonine 314, lysine 345, threonine 346, and glycine 352 each coordinate 1D-myo-inositol 4-phosphate. Residues 347–370 (LGIIMGTFILCWLPFFIVALVLPF) form a helical membrane-spanning segment. Over 371 to 378 (CESSCHMP) the chain is Extracellular. The chain crosses the membrane as a helical span at residues 379–403 (ELLGAIINWLGYSNSLLNPVIYAYF). An NPxxY motif; important for ligand-induced conformation changes and signaling motif is present at residues 396–400 (NPVIY). 3 residues coordinate 1D-myo-inositol 4-phosphate: phenylalanine 403, asparagine 404, and lysine 405. Residues 404-421 (NKDFQNAFKKIIKCKFCR) are Cytoplasmic-facing.

Belongs to the G-protein coupled receptor 1 family. 5-hydroxytryptamine receptor subfamily. HTR1A sub-subfamily. As to quaternary structure, heterodimer; heterodimerizes with GPER1. Interacts with YIF1B. Interacts with GPR39 and GALR1. In terms of tissue distribution, most abundantly expressed in midbrain, in dorsal raphe and hippocampus. Detected at lower levels in amygdala and brain cortex.

It localises to the cell membrane. It is found in the cell projection. Its subcellular location is the dendrite. Its activity is regulated as follows. G-protein coupled receptor activity is regulated by lipids: phosphatidylinositol 4-phosphate increases HTR1A-mediated activity. Plays a role in the regulation of dopamine and 5-hydroxytryptamine levels in the brain, and thereby affects neural activity, mood and behavior. Plays a role in the response to anxiogenic stimuli. G-protein coupled receptor for 5-hydroxytryptamine (serotonin). Also functions as a receptor for various drugs and psychoactive substances. Ligand binding causes a conformation change that triggers signaling via guanine nucleotide-binding proteins (G proteins) and modulates the activity of downstream effectors, such as adenylate cyclase. HTR1A is coupled to G(i)/G(o) G alpha proteins and mediates inhibitory neurotransmission: signaling inhibits adenylate cyclase activity and activates a phosphatidylinositol-calcium second messenger system that regulates the release of Ca(2+) ions from intracellular stores. Beta-arrestin family members regulate signaling by mediating both receptor desensitization and resensitization processes. This is 5-hydroxytryptamine receptor 1A (Htr1a) from Mus musculus (Mouse).